The chain runs to 155 residues: Transcription antitermination protein NusB (155 aa).

It belongs to the NusB family.

Involved in transcription antitermination. Required for transcription of ribosomal RNA (rRNA) genes. Binds specifically to the boxA antiterminator sequence of the ribosomal RNA (rrn) operons. In Vibrio campbellii (strain ATCC BAA-1116), this protein is Transcription antitermination protein NusB.